We begin with the raw amino-acid sequence, 239 residues long: Ribonuclease PH (239 aa).

Phosphate is bound by residues R87 and G125–R127.

Belongs to the RNase PH family. As to quaternary structure, homohexameric ring arranged as a trimer of dimers.

It catalyses the reaction tRNA(n+1) + phosphate = tRNA(n) + a ribonucleoside 5'-diphosphate. Functionally, phosphorolytic 3'-5' exoribonuclease that plays an important role in tRNA 3'-end maturation. Removes nucleotide residues following the 3'-CCA terminus of tRNAs; can also add nucleotides to the ends of RNA molecules by using nucleoside diphosphates as substrates, but this may not be physiologically important. Probably plays a role in initiation of 16S rRNA degradation (leading to ribosome degradation) during starvation. The sequence is that of Ribonuclease PH from Pseudomonas aeruginosa (strain LESB58).